The chain runs to 339 residues: Tetracenomycin polyketide synthesis 8-O-methyl transferase TcmO (339 aa).

S-adenosyl-L-methionine contacts are provided by residues D200 and 226-228; that span reads GDF. H246 acts as the Proton acceptor in catalysis.

It belongs to the class I-like SAM-binding methyltransferase superfamily. Cation-independent O-methyltransferase family.

It functions in the pathway antibiotic biosynthesis; tetracenomycin C biosynthesis. The polypeptide is Tetracenomycin polyketide synthesis 8-O-methyl transferase TcmO (tcmO) (Streptomyces glaucescens).